We begin with the raw amino-acid sequence, 663 residues long: Shugoshin 1 (663 aa).

Coiled coils occupy residues 8–29 (KQAF…RIKK) and 110–132 (DTAE…NLLE). Disordered regions lie at residues 207-250 (RNTA…MNKN), 278-401 (EHTV…LNSG), and 417-478 (FRQN…ARKN). Composition is skewed to basic and acidic residues over residues 231–242 (RLEECNNEDKTE), 280–304 (TVVE…REID), 339–358 (KNKE…KAER), and 366–394 (KPWE…KEKM). The segment covering 427 to 437 (NESSLEISSSE) has biased composition (low complexity). Over residues 443-453 (SLYKPYKDKSK) the composition is skewed to basic and acidic residues.

This sequence belongs to the shugoshin family. As to quaternary structure, binds microtubules. Ubiquitinated by the anaphase promoting complex (APC) at the onset of anaphase, conducting to its degradation.

The protein resides in the nucleus. It localises to the chromosome. It is found in the centromere. Its subcellular location is the kinetochore. The protein localises to the nucleus speckle. Functionally, plays a central role in chromosome cohesion during mitosis by preventing premature dissociation of cohesin complex from centromeres after prophase, when most of cohesin complex dissociates from chromosomes arms. May act by preventing phosphorylation of the stag2 subunit of cohesin complex at the centromere, ensuring cohesin persistence at centromere until cohesin cleavage by espl1/separase at anaphase. May regulate kinetochore microtubule stability in mitosis, possibly to sense tension on mitotic chromosomes. The chain is Shugoshin 1 from Xenopus laevis (African clawed frog).